Here is a 323-residue protein sequence, read N- to C-terminus: Deaminated glutathione amidase (323 aa).

The N-terminal 33 residues, 1 to 33, are a transit peptide targeting the mitochondrion; that stretch reads MLGFITRPPHQLLCTGYRLLRTPVLCTQPRPRT. The CN hydrolase domain maps to 42-294; that stretch reads LPLVAVCQVT…PGLCLARIDL (253 aa). The active-site Proton acceptor is the Glu-82. Lys-157 (proton donor) is an active-site residue. The active-site Nucleophile is the Cys-199.

This sequence belongs to the carbon-nitrogen hydrolase superfamily. NIT1/NIT2 family. Expressed in most tissues with higher expression in adult liver and kidney as well as in fetal adrenal gland and skeletal muscle.

It is found in the mitochondrion. The protein localises to the cytoplasm. The enzyme catalyses N-(4-oxoglutaryl)-L-cysteinylglycine + H2O = L-cysteinylglycine + 2-oxoglutarate. It carries out the reaction N-(4-carboxy-4-oxobutanoyl)-L-ethylglycylglycine + H2O = N-(2-aminobutanoyl)glycine + 2-oxoglutarate. In terms of biological role, catalyzes the hydrolysis of the amide bond in N-(4-oxoglutarate)-L-cysteinylglycine (deaminated glutathione), a metabolite repair reaction to dispose of the harmful deaminated glutathione. Possesses amidase activity toward deaminated ophthalmate in vitro. Plays a role in cell growth and apoptosis: loss of expression promotes cell growth, resistance to DNA damage stress and increased incidence to NMBA-induced tumors. Has tumor suppressor properties that enhances the apoptotic responsiveness in cancer cells; this effect is additive to the tumor suppressor activity of FHIT. It is also a negative regulator of primary T-cells. In Mus musculus (Mouse), this protein is Deaminated glutathione amidase.